Consider the following 216-residue polypeptide: Small ribosomal subunit protein eS6 (216 aa).

This sequence belongs to the eukaryotic ribosomal protein eS6 family.

The chain is Small ribosomal subunit protein eS6 from Staphylothermus marinus (strain ATCC 43588 / DSM 3639 / JCM 9404 / F1).